A 145-amino-acid chain; its full sequence is uncharacterized protein (145 aa).

A disordered region spans residues Gly71–Gly95.

This is an uncharacterized protein from Homo sapiens (Human).